A 356-amino-acid polypeptide reads, in one-letter code: UDP-3-O-acylglucosamine N-acyltransferase (356 aa).

H242 acts as the Proton acceptor in catalysis.

It belongs to the transferase hexapeptide repeat family. LpxD subfamily. As to quaternary structure, homotrimer.

The catalysed reaction is a UDP-3-O-[(3R)-3-hydroxyacyl]-alpha-D-glucosamine + a (3R)-hydroxyacyl-[ACP] = a UDP-2-N,3-O-bis[(3R)-3-hydroxyacyl]-alpha-D-glucosamine + holo-[ACP] + H(+). Its pathway is bacterial outer membrane biogenesis; LPS lipid A biosynthesis. Functionally, catalyzes the N-acylation of UDP-3-O-acylglucosamine using 3-hydroxyacyl-ACP as the acyl donor. Is involved in the biosynthesis of lipid A, a phosphorylated glycolipid that anchors the lipopolysaccharide to the outer membrane of the cell. In Acinetobacter baumannii (strain AB0057), this protein is UDP-3-O-acylglucosamine N-acyltransferase.